A 529-amino-acid polypeptide reads, in one-letter code: MSRQLNIKSSGDKGNFSVHSAVVPRKAVGSLASYCAAGRGAGAGFGSRSLYSLGGNRRISFNVAGGGVRAGGYGFRPGSGYGGGRASGFAGSMFGSVALGPACLSVCPPGGIHQVTVNKSLLAPLNVELDPEIQKVRAQEREQIKVLNDKFASFIDKVRFLEQQNQVLETKWELLQQLDLNNCKKNLEPILEGYISNLRKQLETLSGDRVRLDSELRSMRDLVEDYKKRYEVEINRRTTAENEFVVLKKDADAAYAVKVELQAKVDSLDKEIKFLKCLYDAEIAQIQTHASETSVILSMDNNRDLDLDSIIAEVRMHYEEIALKSKAEAEALYQTKIQELQLAASRHGDDLKHTRSEMVELNRLIQRIRCEIGNVKKQRASLETAIADAEQRGDNALKDAQAKLDELEGALHQAKEELARMLREYQELMSLKLALDMEIATYRKLLEGEECRMSGENPSSVSISVISSSSYSYHHPSSAGVDLGASAVAGSSGSTQSGQTKTTEARGGDLKDTQGKSTPASIPARKATR.

Residues 1–139 (MSRQLNIKSS…DPEIQKVRAQ (139 aa)) form a head region. The segment at 140-175 (EREQIKVLNDKFASFIDKVRFLEQQNQVLETKWELL) is coil 1A. Residues 140–453 (EREQIKVLND…KLLEGEECRM (314 aa)) form the IF rod domain. The tract at residues 176 to 194 (QQLDLNNCKKNLEPILEGY) is linker 1. The interval 195 to 286 (ISNLRKQLET…CLYDAEIAQI (92 aa)) is coil 1B. The segment at 287-310 (QTHASETSVILSMDNNRDLDLDSI) is linker 12. A coil 2 region spans residues 311–449 (IAEVRMHYEE…ATYRKLLEGE (139 aa)). Residues 450–529 (ECRMSGENPS…ASIPARKATR (80 aa)) form a tail region. The span at 484–500 (GASAVAGSSGSTQSGQT) shows a compositional bias: low complexity. The tract at residues 484–529 (GASAVAGSSGSTQSGQTKTTEARGGDLKDTQGKSTPASIPARKATR) is disordered. A compositionally biased stretch (basic and acidic residues) spans 503-514 (TEARGGDLKDTQ). A Phosphothreonine modification is found at Thr-513.

It belongs to the intermediate filament family. In terms of assembly, heterotetramer of two type I and two type II keratins. Highly expressed in hair follicles from scalp. In hair, it is specifically present in the inner root sheath (IRS) of the hair follicle. Present in the IRS Huxley layer, but not in Henle layer or cuticle of the IRS. In the IRS Huxley layer, it is expressed in specialized Huxley cells, termed 'Fluegelzellen, along the area of differentiated Henle cells (at protein level).

In terms of biological role, has a role in hair formation. Specific component of keratin intermediate filaments in the inner root sheath (IRS) of the hair follicle. The chain is Keratin, type II cytoskeletal 74 (KRT74) from Homo sapiens (Human).